Consider the following 150-residue polypeptide: 3-dehydroquinate dehydratase (150 aa).

Tyr-23 acts as the Proton acceptor in catalysis. Substrate is bound by residues Asn-75, His-81, and Asp-88. His-101 acts as the Proton donor in catalysis. Residues 102–103 (LS) and Arg-112 contribute to the substrate site.

The protein belongs to the type-II 3-dehydroquinase family. As to quaternary structure, homododecamer.

It catalyses the reaction 3-dehydroquinate = 3-dehydroshikimate + H2O. Its pathway is metabolic intermediate biosynthesis; chorismate biosynthesis; chorismate from D-erythrose 4-phosphate and phosphoenolpyruvate: step 3/7. Its function is as follows. Catalyzes a trans-dehydration via an enolate intermediate. The protein is 3-dehydroquinate dehydratase of Pseudomonas savastanoi pv. phaseolicola (strain 1448A / Race 6) (Pseudomonas syringae pv. phaseolicola (strain 1448A / Race 6)).